The chain runs to 254 residues: Imidazole glycerol phosphate synthase subunit HisF (254 aa).

Catalysis depends on residues D12 and D131.

This sequence belongs to the HisA/HisF family. In terms of assembly, heterodimer of HisH and HisF.

The protein localises to the cytoplasm. The catalysed reaction is 5-[(5-phospho-1-deoxy-D-ribulos-1-ylimino)methylamino]-1-(5-phospho-beta-D-ribosyl)imidazole-4-carboxamide + L-glutamine = D-erythro-1-(imidazol-4-yl)glycerol 3-phosphate + 5-amino-1-(5-phospho-beta-D-ribosyl)imidazole-4-carboxamide + L-glutamate + H(+). Its pathway is amino-acid biosynthesis; L-histidine biosynthesis; L-histidine from 5-phospho-alpha-D-ribose 1-diphosphate: step 5/9. IGPS catalyzes the conversion of PRFAR and glutamine to IGP, AICAR and glutamate. The HisF subunit catalyzes the cyclization activity that produces IGP and AICAR from PRFAR using the ammonia provided by the HisH subunit. This chain is Imidazole glycerol phosphate synthase subunit HisF, found in Janthinobacterium sp. (strain Marseille) (Minibacterium massiliensis).